A 223-amino-acid polypeptide reads, in one-letter code: Endonuclease V (223 aa).

2 residues coordinate Mg(2+): Asp35 and Asp103.

The protein belongs to the endonuclease V family. Mg(2+) is required as a cofactor.

The protein localises to the cytoplasm. The enzyme catalyses Endonucleolytic cleavage at apurinic or apyrimidinic sites to products with a 5'-phosphate.. DNA repair enzyme involved in the repair of deaminated bases. Selectively cleaves double-stranded DNA at the second phosphodiester bond 3' to a deoxyinosine leaving behind the intact lesion on the nicked DNA. The sequence is that of Endonuclease V from Klebsiella pneumoniae subsp. pneumoniae (strain ATCC 700721 / MGH 78578).